The primary structure comprises 745 residues: Probable xanthine dehydrogenase subunit D (745 aa).

Mo-molybdopterin is bound by residues Q204, F235, and A508.

This sequence belongs to the xanthine dehydrogenase family. In terms of assembly, could be composed of four subunits: PucA, PucC, PucD and PucE. The cofactor is Mo-molybdopterin.

The enzyme catalyses xanthine + NAD(+) + H2O = urate + NADH + H(+). It carries out the reaction hypoxanthine + NAD(+) + H2O = xanthine + NADH + H(+). It functions in the pathway purine metabolism; hypoxanthine degradation; urate from hypoxanthine: step 1/2. Its pathway is purine metabolism; hypoxanthine degradation; urate from hypoxanthine: step 2/2. Its function is as follows. Oxidizes hypoxanthine and xanthine to uric acid. This is Probable xanthine dehydrogenase subunit D (pucD) from Bacillus subtilis (strain 168).